A 347-amino-acid chain; its full sequence is Protein phosphatase 2C homolog 1 (347 aa).

The disordered stretch occupies residues 1-41; the sequence is MKGSHPNAGSLLEPLHKLNPFSENSTSGHRKNASDHSADGE. Basic and acidic residues predominate over residues 32–41; that stretch reads NASDHSADGE. The region spanning 71–323 is the PPM-type phosphatase domain; sequence LAGLMEDKNQ…DNITCIVVNL (253 aa). The Mn(2+) site is built by D109, G110, D275, and D314.

It belongs to the PP2C family. In terms of assembly, monomer. The cofactor is Mg(2+). Requires Mn(2+) as cofactor.

The enzyme catalyses O-phospho-L-seryl-[protein] + H2O = L-seryl-[protein] + phosphate. It catalyses the reaction O-phospho-L-threonyl-[protein] + H2O = L-threonyl-[protein] + phosphate. Its function is as follows. Serine and threonine phosphatase. Has a specialized role in the heat shock response. May be responsible for the dephosphorylation of hsp90. This is Protein phosphatase 2C homolog 1 (ptc1) from Schizosaccharomyces pombe (strain 972 / ATCC 24843) (Fission yeast).